A 757-amino-acid chain; its full sequence is Transferrin receptor protein 1 (757 aa).

The Cytoplasmic segment spans residues 1–67 (MMDQARSAIS…KHRRLNGRLC (67 aa)). The interval 1 to 67 (MMDQARSAIS…KHRRLNGRLC (67 aa)) is mediates interaction with SH3BP4. Residues Ser10 and Ser19 each carry the phosphoserine modification. Tyr20 is modified (phosphotyrosine). The Endocytosis signal motif lies at 20-23 (YTRF). Thr21 carries the phosphothreonine modification. Phosphoserine is present on Ser24. The short motif at 58-61 (KHRR) is the Stop-transfer sequence element. The S-palmitoyl cysteine moiety is linked to residue Cys67. The helical; Signal-anchor for type II membrane protein transmembrane segment at 68–88 (FGTIAVVIFFLIGFMIGYLGY) threads the bilayer. The Extracellular portion of the chain corresponds to 89–757 (CKRTEQKDCV…GDIWDIDNEF (669 aa)). A glycan (O-linked (GalNAc...) threonine) is linked at Thr103. Positions 220–310 (SKATTVSGKL…GTGDPYTPGF (91 aa)) constitute a PA domain. N-linked (GlcNAc...) asparagine glycans are attached at residues Asn248 and Asn314. The interval 566–757 (NLDTYEKLIQ…GDIWDIDNEF (192 aa)) is ligand-binding. The Cell attachment site signature appears at 643-645 (RGD). Residues Asn719 and Asn724 are each glycosylated (N-linked (GlcNAc...) asparagine).

It belongs to the peptidase M28 family. M28B subfamily. In terms of assembly, homodimer; disulfide-linked. Binds one transferrin molecule per subunit. Interacts with SH3BP4. Interacts with STEAP3; facilitates TFRC endocytosis in erythroid precursor cells. Stearoylated by ZDHHC6 which inhibits TFRC-mediated activation of the JNK pathway and promotes mitochondrial fragmentation. Stearoylation does not affect iron uptake. Post-translationally, N- and O-glycosylated, phosphorylated and palmitoylated.

Its subcellular location is the cell membrane. The protein resides in the melanosome. Its function is as follows. Cellular uptake of iron occurs via receptor-mediated endocytosis of ligand-occupied transferrin receptor into specialized endosomes. Endosomal acidification leads to iron release. The apotransferrin-receptor complex is then recycled to the cell surface with a return to neutral pH and the concomitant loss of affinity of apotransferrin for its receptor. Transferrin receptor is necessary for development of erythrocytes and the nervous system. Positively regulates T and B cell proliferation through iron uptake. Acts as a lipid sensor that regulates mitochondrial fusion by regulating activation of the JNK pathway. When dietary levels of stearate (C18:0) are low, promotes activation of the JNK pathway, resulting in HUWE1-mediated ubiquitination and subsequent degradation of the mitofusin MFN2 and inhibition of mitochondrial fusion. When dietary levels of stearate (C18:0) are high, TFRC stearoylation inhibits activation of the JNK pathway and thus degradation of the mitofusin MFN2. Mediates uptake of NICOL1 into fibroblasts where it may regulate extracellular matrix production. This chain is Transferrin receptor protein 1 (TFRC), found in Cricetulus griseus (Chinese hamster).